A 645-amino-acid chain; its full sequence is Dictomallein-like protein (645 aa).

The N-terminal stretch at 1–13 (MKLSMVMVLLVLA) is a signal peptide. The interval 19–55 (CGGNDDNNSERTHESGDSNGDVTTPDNDASSNDEDDA) is disordered. Residues 177–448 (PALHPELDLT…QRWVRNRARM (272 aa)) form the Peptidase M66 domain. Residue histidine 333 participates in Zn(2+) binding. Glutamate 334 is a catalytic residue. The Zn(2+) site is built by histidine 337 and histidine 343.

It belongs to the dictomallein family. Zn(2+) is required as a cofactor.

It localises to the secreted. This Hahella chejuensis (strain KCTC 2396) protein is Dictomallein-like protein (dtmL).